The following is a 371-amino-acid chain: Lipoyl synthase, mitochondrial (371 aa).

The N-terminal 24 residues, 1–24, are a transit peptide targeting the mitochondrion; the sequence is MLSRFKCSRLQLQKRAISVTKATT. Positions 20–29 are enriched in polar residues; the sequence is TKATTTTASQ. The segment at 20-42 is disordered; the sequence is TKATTTTASQPKRRRTTTFSDAL. Residues cysteine 107, cysteine 112, cysteine 118, cysteine 138, cysteine 142, cysteine 145, and serine 353 each contribute to the [4Fe-4S] cluster site. The Radical SAM core domain maps to 121–342; sequence GGDSSKATAT…RDKALELGFL (222 aa).

The protein belongs to the radical SAM superfamily. Lipoyl synthase family. Requires [4Fe-4S] cluster as cofactor.

Its subcellular location is the mitochondrion. It catalyses the reaction [[Fe-S] cluster scaffold protein carrying a second [4Fe-4S](2+) cluster] + N(6)-octanoyl-L-lysyl-[protein] + 2 oxidized [2Fe-2S]-[ferredoxin] + 2 S-adenosyl-L-methionine + 4 H(+) = [[Fe-S] cluster scaffold protein] + N(6)-[(R)-dihydrolipoyl]-L-lysyl-[protein] + 4 Fe(3+) + 2 hydrogen sulfide + 2 5'-deoxyadenosine + 2 L-methionine + 2 reduced [2Fe-2S]-[ferredoxin]. It participates in protein modification; protein lipoylation via endogenous pathway; protein N(6)-(lipoyl)lysine from octanoyl-[acyl-carrier-protein]: step 2/2. Functionally, catalyzes the radical-mediated insertion of two sulfur atoms into the C-6 and C-8 positions of the octanoyl moiety bound to the lipoyl domains of lipoate-dependent enzymes, thereby converting the octanoylated domains into lipoylated derivatives. This chain is Lipoyl synthase, mitochondrial, found in Lachancea thermotolerans (strain ATCC 56472 / CBS 6340 / NRRL Y-8284) (Yeast).